We begin with the raw amino-acid sequence, 169 residues long: Allophycocyanin subunit beta-18 (169 aa).

Residue N72 is modified to N4-methylasparagine. Residue C82 coordinates (2R,3E)-phycocyanobilin.

It belongs to the phycobiliprotein family. As to quaternary structure, heterodimer of ApcE and this beta chain. In terms of processing, contains one covalently linked bilin chromophore. The chromophore is added by phycocyanobilin lyase CpcUS.

The protein localises to the cellular thylakoid membrane. A variant beta-allophycocyanin (AP) which forms a complex with ApcE, a phycobilisome terminal emitter that influences energy transfer to photosystem II. In Picosynechococcus sp. (strain ATCC 27264 / PCC 7002 / PR-6) (Agmenellum quadruplicatum), this protein is Allophycocyanin subunit beta-18 (apcF).